Reading from the N-terminus, the 714-residue chain is Delta-like protein 1 (714 aa).

Residues 1 to 17 (MGRRSALALAVVSALLC) form the signal peptide. Topologically, residues 18–537 (QVWSSGVFEL…VAAQGGSFPW (520 aa)) are extracellular. Residues 176-220 (FVCDEHYYGEGCSVFCRPRDDAFGHFTCGERGEKMCDPGWKGQYC) enclose the DSL domain. 27 disulfides stabilise this stretch: C178-C187, C191-C203, C211-C220, C225-C236, C229-C242, C244-C253, C256-C267, C262-C273, C275-C284, C291-C303, C297-C313, C315-C324, C331-C342, C336-C351, C353-C362, C369-C380, C374-C390, C392-C401, C408-C419, C413-C428, C430-C439, C446-C457, C451-C466, C468-C477, C484-C495, C489-C504, and C506-C515. EGF-like domains lie at 225-253 (CLPG…GRYC), 256-284 (CIRY…GLFC), and 291-324 (CTHH…GANC). An EGF-like 4; calcium-binding domain is found at 331–362 (CAPSPCRNGGSCTDLEDSYSCTCPPGFYGKVC). EGF-like domains are found at residues 369–401 (CADG…GFNC) and 408–439 (CSSS…GRYC). An EGF-like 7; calcium-binding domain is found at 446–477 (CASSPCANGGTCRDSVNDFSCTCPPGYTGRNC). The N-linked (GlcNAc...) asparagine glycan is linked to N476. The EGF-like 8 domain maps to 484–515 (CEHAPCHNGATCHQRGQRYMCECAQGYGGANC). The chain crosses the membrane as a helical span at residues 538-560 (VAVCAGVVLVLLLLLGCAAVVVC). Topologically, residues 561–714 (VRLKLQKHQP…KDECVIATEV (154 aa)) are cytoplasmic. Residue K605 forms a Glycyl lysine isopeptide (Lys-Gly) (interchain with G-Cter in ubiquitin) linkage. T630 bears the Phosphothreonine mark. Residues 644-656 (ATVRDAHSKRDTK) show a composition bias toward basic and acidic residues. Residues 644-690 (ATVRDAHSKRDTKCQSQGSVGEEKSTSTLRGGEVPDRKRPESVYSTS) are disordered. Position 685 is a phosphoserine; by PKB (S685). S688 is modified (phosphoserine). An interaction with MAGI1 region spans residues 711 to 714 (ATEV).

Homodimer. Interacts with TJP1. Interacts with MAGI1 (via PDZ domain); forms a complex with CTNNB1 and CDH2 and promotes recruitment to the adherens junction and stabilization on the cell surface. Interacts with PSEN1; undergoes a presenilin-dependent gamma-secretase cleavage that releases a Dll1-intracellular form. Interacts with MFAP5. Interacts with MIB1. Interacts with NEURL1B; leads to ubiquitination. Interacts with NEURL1. Interacts with SYNJ2BP; enhances DLL1 protein stability, and promotes Notch signaling in endothelial cells. Interacts with MAGI1, MAGI2, MAGI3 and MPDZ. Interacts (via ubiquitin) with EPN1 (via IUM domain); binding with NOTCH1 attached to neighboring cell, promotes ligand ubiquitination and EPN1 interaction, leading to NECD transendocytosis and Notch signaling. Interacts with NOTCH1. Post-translationally, ubiquitinated by MIB (MIB1 or MIB2), leading to its endocytosis and subsequent degradation. Ubiquitinated; promotes recycling back to the plasma membrane and confers a strong affinity for NOTCH1. Mono- and multi-ubiquitinated. Multi-ubiquitination of Lys-605 by MIB1 promotes both cis and trans-interaction with NOTCH1, as well as activation of Notch signaling. Ubiquitinated by NEURL1B. Phosphorylated in a membrane association-dependent manner. Phosphorylation at Ser-688 requires the presence of Ser-685, whereas phosphorylation at Thr-630 and Ser-685 occur independently of the other sites. Phosphorylation is required for full ligand activity in vitro and affects surface presentation, ectodomain shedding, and endocytosis. In terms of processing, O-fucosylated. Can be elongated to a disaccharide by MFNG.

It localises to the apical cell membrane. Its subcellular location is the cell junction. The protein localises to the adherens junction. The protein resides in the membrane raft. In terms of biological role, transmembrane ligand protein of NOTCH1, NOTCH2 and NOTCH3 receptors that binds the extracellular domain (ECD) of Notch receptor in a cis and trans fashion manner. Following transinteraction, ligand cells produce mechanical force that depends of a clathrin-mediated endocytosis, requiring ligand ubiquitination, EPN1 interaction, and actin polymerisation; these events promote Notch receptor extracellular domain (NECD) transendocytosis and triggers Notch signaling through induction of cleavage, hyperphosphorylation, and nuclear accumulation of the intracellular domain of Notch receptors (NICD). Is required for embryonic development and maintenance of adult stem cells in many different tissues and immune systeme; the DLL1-induced Notch signaling is mediated through an intercellular communication that regulates cell lineage, cell specification, cell patterning and morphogenesis through effects on differentiation and proliferation. Plays a role in brain development at different level, namely by regulating neuronal differentiation of neural precursor cells via cell-cell interaction, most likely through the lateral inhibitory system in an endogenous level dependent-manner. During neocortex development, Dll1-Notch signaling transmission is mediated by dynamic interactions between intermediate neurogenic progenitors and radial glia; the cell-cell interactions are mediated via dynamic and transient elongation processes, likely to reactivate/maintain Notch activity in neighboring progenitors, and coordinate progenitor cell division and differentiation across radial and zonal boundaries. During cerebellar development, regulates Bergmann glial monolayer formation and its morphological maturation through a Notch signaling pathway. At the retina and spinal cord level, regulates neurogenesis by preventing the premature differentiation of neural progenitors and also by maintaining progenitors in spinal cord through Notch signaling pathway. Also controls neurogenesis of the neural tube in a progenitor domain-specific fashion along the dorsoventral axis. Maintains quiescence of neural stem cells and plays a role as a fate determinant that segregates asymmetrically to one daughter cell during neural stem cells mitosis, resulting in neuronal differentiation in Dll1-inheriting cell. Plays a role in immune systeme development, namely the development of all T-cells and marginal zone (MZ) B cells. Blocks the differentiation of progenitor cells into the B-cell lineage while promoting the emergence of a population of cells with the characteristics of a T-cell/NK-cell precursor. Also plays a role during muscle development. During early development, inhibits myoblasts differentiation from the medial dermomyotomal lip and later regulates progenitor cell differentiation. Directly modulates cell adhesion and basal lamina formation in satellite cells through Notch signaling. Maintains myogenic progenitors pool by suppressing differentiation through down-regulation of MYOD1 and is required for satellite cell homing and PAX7 expression. During craniofacial and trunk myogenesis suppresses differentiation of cranial mesoderm-derived and somite-derived muscle via MYOD1 regulation but in cranial mesoderm-derived progenitors, is neither required for satellite cell homing nor for PAX7 expression. Also plays a role during pancreatic cell development. During type B pancreatic cell development, may be involved in the initiation of proximodistal patterning in the early pancreatic epithelium. Stimulates multipotent pancreatic progenitor cells proliferation and pancreatic growth by maintaining HES1 expression and PTF1A protein levels. During fetal stages of development, is required to maintain arterial identity and the responsiveness of arterial endothelial cells for VEGFA through regulation of KDR activation and NRP1 expression. Controls sprouting angiogenesis and subsequent vertical branch formation through regulation on tip cell differentiation. Negatively regulates goblet cell differentiation in intestine and controls secretory fat commitment through lateral inhibition in small intestine. Plays a role during inner ear development; negatively regulates auditory hair cell differentiation. Plays a role during nephron development through Notch signaling pathway. Regulates growth, blood pressure and energy homeostasis. This Rattus norvegicus (Rat) protein is Delta-like protein 1 (Dll1).